The following is a 160-amino-acid chain: Transcription antitermination protein NusB (160 aa).

Belongs to the NusB family.

Its function is as follows. Involved in transcription antitermination. Required for transcription of ribosomal RNA (rRNA) genes. Binds specifically to the boxA antiterminator sequence of the ribosomal RNA (rrn) operons. This chain is Transcription antitermination protein NusB, found in Mycolicibacterium smegmatis (strain ATCC 700084 / mc(2)155) (Mycobacterium smegmatis).